The chain runs to 122 residues: Phosphoribosyl-ATP pyrophosphatase (122 aa).

Belongs to the PRA-PH family.

The protein localises to the cytoplasm. It carries out the reaction 1-(5-phospho-beta-D-ribosyl)-ATP + H2O = 1-(5-phospho-beta-D-ribosyl)-5'-AMP + diphosphate + H(+). Its pathway is amino-acid biosynthesis; L-histidine biosynthesis; L-histidine from 5-phospho-alpha-D-ribose 1-diphosphate: step 2/9. The protein is Phosphoribosyl-ATP pyrophosphatase of Cupriavidus metallidurans (strain ATCC 43123 / DSM 2839 / NBRC 102507 / CH34) (Ralstonia metallidurans).